Reading from the N-terminus, the 172-residue chain is Adenine phosphoribosyltransferase (172 aa).

This sequence belongs to the purine/pyrimidine phosphoribosyltransferase family. Homodimer.

It localises to the cytoplasm. It carries out the reaction AMP + diphosphate = 5-phospho-alpha-D-ribose 1-diphosphate + adenine. It functions in the pathway purine metabolism; AMP biosynthesis via salvage pathway; AMP from adenine: step 1/1. Its function is as follows. Catalyzes a salvage reaction resulting in the formation of AMP, that is energically less costly than de novo synthesis. The chain is Adenine phosphoribosyltransferase from Prochlorococcus marinus (strain NATL1A).